A 117-amino-acid chain; its full sequence is Immunoglobulin kappa variable 1-16 (117 aa).

The signal sequence occupies residues 1–22; the sequence is MDMRVLAQLLGLLLLCFPGARC. Residues 23–45 form a framework-1 region; it reads DIQMTQSPSSLSASVGDRVTITC. Residues 24-117 form the Ig-like domain; that stretch reads IQMTQSPSSL…YYCQQYNSYP (94 aa). A disulfide bridge connects residues C45 and C110. The complementarity-determining-1 stretch occupies residues 46–56; it reads RASQGISNYLA. The framework-2 stretch occupies residues 57–71; the sequence is WFQQKPGKAPKSLIY. The complementarity-determining-2 stretch occupies residues 72–78; the sequence is AASSLQS. Residues 79 to 110 form a framework-3 region; that stretch reads GVPSKFSGSGSGTDFTLTISSLQPEDFATYYC. The complementarity-determining-3 stretch occupies residues 111 to 117; sequence QQYNSYP.

As to quaternary structure, immunoglobulins are composed of two identical heavy chains and two identical light chains; disulfide-linked.

The protein localises to the secreted. Its subcellular location is the cell membrane. Functionally, v region of the variable domain of immunoglobulin light chains that participates in the antigen recognition. Immunoglobulins, also known as antibodies, are membrane-bound or secreted glycoproteins produced by B lymphocytes. In the recognition phase of humoral immunity, the membrane-bound immunoglobulins serve as receptors which, upon binding of a specific antigen, trigger the clonal expansion and differentiation of B lymphocytes into immunoglobulins-secreting plasma cells. Secreted immunoglobulins mediate the effector phase of humoral immunity, which results in the elimination of bound antigens. The antigen binding site is formed by the variable domain of one heavy chain, together with that of its associated light chain. Thus, each immunoglobulin has two antigen binding sites with remarkable affinity for a particular antigen. The variable domains are assembled by a process called V-(D)-J rearrangement and can then be subjected to somatic hypermutations which, after exposure to antigen and selection, allow affinity maturation for a particular antigen. This chain is Immunoglobulin kappa variable 1-16, found in Homo sapiens (Human).